Reading from the N-terminus, the 114-residue chain is Cytochrome c oxidase subunit 7A2-like, mitochondrial (114 aa).

A mitochondrion-targeting transit peptide spans 1–55 (MYYKFSGFTQKLAGAWASDAYSPQGLRPVVSTEAPPIIFATPTKLSSGPTAYDYA). N6-acetyllysine is present on Lys-69. The helical transmembrane segment at 82-107 (PDQMLYRTTMALTVGGTIYCLIALYM) threads the bilayer.

Belongs to the cytochrome c oxidase VIIa family. As to quaternary structure, interacts with the mitochondrial respiratory complexes III (CIII) and IV (CIV), promoting their association.

It localises to the mitochondrion inner membrane. Its function is as follows. Assembly factor that mediates the formation of some mitochondrial respiratory supercomplexes (respirasomes), thereby promoting oxidative phosphorylation and energy metabolism. Acts as a molecular adapter that associates with both mitochondrial respiratory complexes III (CIII) and IV (CIV), promoting their association. Mediates the formation of various mitochondrial respiratory supercomplexes, such as MCIII(2)IV(2), composed of two CIII and two CIV, and the CS-respirasome (MCI(1)III(2)IV(2)), composed of one CI, two CIII and two CIV. Not involved in the formation of the canonical respirasome (MCI(1)III(2)IV(1)), composed of one CI, two CIII and one CIV. The formation of different respirasomes is important for cell adaptation to oxygen conditions and prevent metabolic exhaustion: supercomplexes mediated by COX7A2L/SCAF1 are required to maintain oxidative phosphorylation upon low oxygen conditions and promote metabolic rewiring toward glycolysis. In Bos taurus (Bovine), this protein is Cytochrome c oxidase subunit 7A2-like, mitochondrial.